Consider the following 749-residue polypeptide: Cytosolic phospholipase A2 (749 aa).

The phospholipid binding stretch occupies residues 1-178; that stretch reads MSFIDPYQHI…MKKLLGPKNS (178 aa). At Ser2 the chain carries Phosphoserine. In terms of domain architecture, C2 spans 6–122; sequence PYQHIIVEHH…KVGEKKQVPF (117 aa). The Ca(2+) site is built by Asp40, Thr41, Asp43, Asn65, Asp93, Ala94, and Asn95. The PLA2c domain occupies 140 to 740; the sequence is SSPDLRFSMA…SSVEARRFFN (601 aa). Residue Ser228 is the Nucleophile of the active site. Thr268 carries the post-translational modification Phosphothreonine. Residues 426–458 form a disordered region; it reads AKHIVSNDSSDSDDESQGPKGTEHEEAEREYQN. A phosphoserine mark is found at Ser434, Ser435, and Ser437. Residues 446-457 are compositionally biased toward basic and acidic residues; it reads GTEHEEAEREYQ. Ser505 is modified (phosphoserine; by MAPK). Ser515 bears the Phosphoserine mark. Lys541 is covalently cross-linked (Glycyl lysine isopeptide (Lys-Gly) (interchain with G-Cter in SUMO2)). Catalysis depends on Asp549, which acts as the Proton acceptor. A Glycyl lysine isopeptide (Lys-Gly) (interchain with G-Cter in SUMO2) cross-link involves residue Lys606. Phosphoserine is present on residues Ser727 and Ser729.

As to quaternary structure, interacts with KAT5. Post-translationally, phosphorylated at both Ser-505 and Ser-727 in response to mitogenic stimuli. Detected in granulosa cells after stimulation with chorionic gonadotropin (at protein level).

The protein resides in the cytoplasm. It localises to the golgi apparatus membrane. Its subcellular location is the nucleus envelope. It carries out the reaction a 1,2-diacyl-sn-glycero-3-phosphocholine + H2O = a 1-acyl-sn-glycero-3-phosphocholine + a fatty acid + H(+). The catalysed reaction is a 1-O-alkyl-2-acyl-sn-glycero-3-phosphocholine + H2O = a 1-O-alkyl-sn-glycero-3-phosphocholine + a fatty acid + H(+). It catalyses the reaction a 1-acyl-sn-glycero-3-phosphocholine + H2O = sn-glycerol 3-phosphocholine + a fatty acid + H(+). The enzyme catalyses 1-hexadecanoyl-2-(5Z,8Z,11Z,14Z-eicosatetraenoyl)-sn-glycero-3-phosphocholine + H2O = 1-hexadecanoyl-sn-glycero-3-phosphocholine + (5Z,8Z,11Z,14Z)-eicosatetraenoate + H(+). It carries out the reaction 1,2-di-(5Z,8Z,11Z,14Z-eicosatetraenoyl)-sn-glycero-3-phosphocholine + H2O = 1-(5Z,8Z,11Z,14Z-eicosatetraenoyl)-sn-glycero-3-phosphocholine + (5Z,8Z,11Z,14Z)-eicosatetraenoate + H(+). The catalysed reaction is 1-octadecanoyl-2-(5Z,8Z,11Z,14Z-eicosatetraenoyl)-sn-glycero-3-phosphocholine + H2O = 1-octadecanoyl-sn-glycero-3-phosphocholine + (5Z,8Z,11Z,14Z)-eicosatetraenoate + H(+). It catalyses the reaction 1-hexadecanoyl-2-(9Z,12Z-octadecadienoyl)-sn-glycero-3-phosphocholine + H2O = (9Z,12Z)-octadecadienoate + 1-hexadecanoyl-sn-glycero-3-phosphocholine + H(+). The enzyme catalyses 1-octadecanoyl-2-(9Z,12Z,15Z-octadecatrienoyl)-sn-glycero-3-phosphocholine + H2O = (9Z,12Z,15Z)-octadecatrienoate + 1-octadecanoyl-sn-glycero-3-phosphocholine + H(+). It carries out the reaction 1-(5Z,8Z,11Z,14Z-eicosatetraenoyl)-2-hexadecanoyl-sn-glycero-3-phosphocholine + H2O = 1-(5Z,8Z,11Z,14Z-eicosatetraenoyl)-sn-glycero-3-phosphocholine + hexadecanoate + H(+). The catalysed reaction is 1-O-hexadecyl-2-(5Z,8Z,11Z,14Z)-eicosatetraenoyl-sn-glycero-3-phosphocholine + H2O = 1-O-hexadecyl-sn-glycero-3-phosphocholine + (5Z,8Z,11Z,14Z)-eicosatetraenoate + H(+). It catalyses the reaction 1,2-di-(9Z-octadecenoyl)-sn-glycero-3-phospho-(1'-sn-glycerol) + H2O = 1-(9Z-octadecenoyl)-sn-glycero-3-phospho-(1'-sn-glycerol) + (9Z)-octadecenoate + H(+). The enzyme catalyses 1-octadecanoyl-2-(5Z,8Z,11Z,14Z-eicosatetraenoyl)-sn-glycero-3-phosphate + H2O = 1-octadecanoyl-sn-glycero-3-phosphate + (5Z,8Z,11Z,14Z)-eicosatetraenoate + H(+). It carries out the reaction 1-hexadecanoyl-sn-glycero-3-phosphocholine + H2O = sn-glycerol 3-phosphocholine + hexadecanoate + H(+). The catalysed reaction is 2-(prostaglandin E2)-sn-glycero-3-phosphoethanolamine + H2O = sn-glycero-3-phosphoethanolamine + prostaglandin E2 + H(+). It catalyses the reaction 2-[(15S)-hydroxy-(5Z,8Z,11Z,13E)-eicosatetraenoyl]-sn-glycero-3-phosphocholine + H2O = (15S)-hydroxy-(5Z,8Z,11Z,13E)-eicosatetraenoate + sn-glycerol 3-phosphocholine + H(+). The enzyme catalyses 2-[(15R)-hydroxy-(5Z,8Z,11Z,13E)-eicosatetraenoyl]-sn-glycero-3-phosphocholine + H2O = (15R)-hydroxy-(5Z,8Z,11Z,13E)-eicosatetraenoate + sn-glycerol 3-phosphocholine + H(+). It carries out the reaction 2-(prostaglandin E2)-sn-glycero-3-phosphocholine + H2O = prostaglandin E2 + sn-glycerol 3-phosphocholine + H(+). The catalysed reaction is 2-[(11R)-hydroxy-(5Z,8Z,12E,14Z)-eicosatetraenoyl]-sn-glycero-3-phosphocholine + H2O = (11R)-hydroxy-(5Z,8Z,12E,14Z)-eicosatetraenoate + sn-glycerol 3-phosphocholine + H(+). It catalyses the reaction 1-(5Z,8Z,11Z,14Z-eicosatetraenoyl)-2-O-hexadecyl-sn-glycero-3-phosphocholine + H2O = 2-O-hexadecyl-sn-glycero-3-phosphocholine + (5Z,8Z,11Z,14Z)-eicosatetraenoate + H(+). The enzyme catalyses 1-octadecanoyl-2-(5Z,8Z,11Z,14Z-eicosatetraenoyl)-sn-glycero-3-phosphocholine + glycerol = 1-(5Z,8Z,11Z,14Z-eicosatetraenoyl)-glycerol + 1-octadecanoyl-sn-glycero-3-phosphocholine. It carries out the reaction 1-octadecanoyl-2-(9Z,12Z,15Z-octadecatrienoyl)-sn-glycero-3-phosphocholine + glycerol = 1-(9Z,12Z,15Z-octadecatrienoyl)-glycerol + 1-octadecanoyl-sn-glycero-3-phosphocholine. It participates in membrane lipid metabolism; glycerophospholipid metabolism. It functions in the pathway lipid metabolism; arachidonate metabolism. Its pathway is lipid metabolism; prostaglandin biosynthesis. The protein operates within lipid metabolism; leukotriene B4 biosynthesis. Its activity is regulated as follows. Activated by cytosolic calcium, which is necessary for binding to membrane lipids. Activated by phosphorylation in response to mitogenic stimuli. Has primarily calcium-dependent phospholipase and lysophospholipase activities, with a major role in membrane lipid remodeling and biosynthesis of lipid mediators of the inflammatory response. Plays an important role in embryo implantation and parturition through its ability to trigger prostanoid production. Preferentially hydrolyzes the ester bond of the fatty acyl group attached at sn-2 position of phospholipids (phospholipase A2 activity). Selectively hydrolyzes sn-2 arachidonoyl group from membrane phospholipids, providing the precursor for eicosanoid biosynthesis via the cyclooxygenase pathway. In an alternative pathway of eicosanoid biosynthesis, hydrolyzes sn-2 fatty acyl chain of eicosanoid lysophopholipids to release free bioactive eicosanoids. Hydrolyzes the ester bond of the fatty acyl group attached at sn-1 position of phospholipids (phospholipase A1 activity) only if an ether linkage rather than an ester linkage is present at the sn-2 position. This hydrolysis is not stereospecific. Has calcium-independent phospholipase A2 and lysophospholipase activities in the presence of phosphoinositides. Has O-acyltransferase activity. Catalyzes the transfer of fatty acyl chains from phospholipids to a primary hydroxyl group of glycerol (sn-1 or sn-3), potentially contributing to monoacylglycerol synthesis. The protein is Cytosolic phospholipase A2 (PLA2G4A) of Bos taurus (Bovine).